The following is a 184-amino-acid chain: GTP-binding protein Rheb (184 aa).

Residue Lys-8 forms a Glycyl lysine isopeptide (Lys-Gly) (interchain with G-Cter in ubiquitin) linkage. Ser-16, Val-17, Gly-18, Lys-19, Ser-20, Ser-21, Val-32, and Asp-33 together coordinate GDP. Ser-16 contributes to the GTP binding site. 5 residues coordinate GTP: Gly-18, Lys-19, Ser-20, Ser-21, and Val-32. Ser-20 lines the Mg(2+) pocket. Tyr-35, Thr-38, Asn-119, and Asp-122 together coordinate GTP. The short motif at 35–43 is the Effector region element; that stretch reads YDPTIENTF. Residue Thr-38 participates in Mg(2+) binding. Residues Asn-119 and Asp-122 each coordinate GDP. Ser-130 carries the post-translational modification Phosphoserine; by MAPKAPK5. A GDP-binding site is contributed by Ala-150. Residue Ala-150 participates in GTP binding. The residue at position 181 (Cys-181) is a Cysteine methyl ester. Cys-181 carries S-farnesyl cysteine lipidation. A propeptide spans 182 to 184 (removed in mature form); the sequence is SVM.

Belongs to the small GTPase superfamily. Rheb family. Associates with the mTORC1 complex (MTOR, MLST8 and RPTOR) in a guanyl nucleotide-independent manner. Interacts with TSC2. Interacts with MCRS1; the interaction maintains RHEB at the lysosome in its active GTP-bound form and prevents its interaction with the mTORC1 complex inhibitor TSC2, ensuring activation of the mTORC1 complex by RHEB. Interacts (when prenylated) with PDE6D; this promotes release from membranes. Farnesylation is important for efficiently activating mTORC1-mediated signaling. In terms of processing, polyubiquitinated in response to amino acid, promoting its interaction with MTOR and mTORC1 activation. Deubiquitination by ATXN3 promotes recruitment of the TSC-TBC complex and RHEB inactivation by TSC2. Monoubiquitinated at Lys-8 by RNF152, promoting its association with the TSC-TBC complex. Deubiquitinated at Lys-8 by USP4, promoting mTORC1 activation. Post-translationally, phosphorylation by MAPKAPK5 impairs GTP-binding and inactivation. As to expression, ubiquitous. Highest levels observed in skeletal and cardiac muscle.

Its subcellular location is the endomembrane system. The protein localises to the lysosome membrane. The protein resides in the golgi apparatus membrane. It is found in the endoplasmic reticulum membrane. It localises to the cytoplasm. Its subcellular location is the cytosol. The enzyme catalyses GTP + H2O = GDP + phosphate + H(+). Alternates between an inactive form bound to GDP and an active form bound to GTP. Inactivated by the TSC-TBC complex via the GTPase activating protein (GAP) domain of TSC2. Autoinhibited by Tyr-35, which constrains the active site conformation, restricting the access of the catalytic Asp-65 to the nucleotide-binding pocket. Specifically inhibited by NR1 (4-bromo-6-(3,4-dichlorophenylthio)-1-(4-(dimethylcarbamoyl)benzyl)-1H-indole-2-carboxylic acid). Small GTPase that acts as an allosteric activator of the canonical mTORC1 complex, an evolutionarily conserved central nutrient sensor that stimulates anabolic reactions and macromolecule biosynthesis to promote cellular biomass generation and growth. In response to nutrients, growth factors or amino acids, specifically activates the protein kinase activity of MTOR, the catalytic component of the mTORC1 complex: acts by causing a conformational change that allows the alignment of residues in the active site of MTOR, thereby enhancing the phosphorylation of ribosomal protein S6 kinase (RPS6KB1 and RPS6KB2) and EIF4EBP1 (4E-BP1). RHEB is also required for localization of the TSC-TBC complex to lysosomal membranes. In response to starvation, RHEB is inactivated by the TSC-TBC complex, preventing activation of mTORC1. Has low intrinsic GTPase activity. The protein is GTP-binding protein Rheb of Homo sapiens (Human).